The chain runs to 888 residues: Alanine--tRNA ligase (888 aa).

The Zn(2+) site is built by H564, H568, C676, and H680.

It belongs to the class-II aminoacyl-tRNA synthetase family. Zn(2+) serves as cofactor.

It is found in the cytoplasm. It carries out the reaction tRNA(Ala) + L-alanine + ATP = L-alanyl-tRNA(Ala) + AMP + diphosphate. Catalyzes the attachment of alanine to tRNA(Ala) in a two-step reaction: alanine is first activated by ATP to form Ala-AMP and then transferred to the acceptor end of tRNA(Ala). Also edits incorrectly charged Ser-tRNA(Ala) and Gly-tRNA(Ala) via its editing domain. This is Alanine--tRNA ligase from Bartonella tribocorum (strain CIP 105476 / IBS 506).